Consider the following 497-residue polypeptide: MTKHIIVIGGGLGGISAAIRMAQSGYSVSLYEQNNHIGGKVNRHESDGFGFDLGPSILTMPYIFEKLFEYSKKQMSDYVTIKRLPHQWRSFFPDGTTIDLYEGIKETGQHNAILSKKDIEELQNYLNYTRRIDRITEKGYFNYGLDTLSQIIKFHGPLNALINYDYVHTMQQAIDKRISNPYLRQMLGYFIKYVGSSSYDAPAVLSMLFHMQQEQGLWYVEGGIHHLANALEKLAREEGVTIHTGTRVDNIKIYQRHVTGVRLDTGEFVKADYIISNMEVIPTYKYLLHLGTQRLNKLEREFEPASSGYVMHLGVACQYPQLEHHNFFFTENAYLNYQQVFHEKVLPDDPTIYLVNTNKTDHTQAPVGYENIKVLPHIPYIQDQPFTTEDYAKFRDKILDKLEKMGLTDLRKHIIYEDVWTPEDIEKNYRSNRGAIYGVVADKKKNKGFKFTKESQYFENLYFVGGSVNPGGGMPMVTLSGQQVADKINAREAKNRK.

Val-7–Ile-19 is an FAD binding site.

This sequence belongs to the carotenoid/retinoid oxidoreductase family. CrtP subfamily. FAD is required as a cofactor.

It carries out the reaction all-trans-4,4'-diaponeurosporene + 2 AH2 + 2 O2 = 4,4'-diaponeurosporenal + 2 A + 3 H2O. It participates in carotenoid biosynthesis; staphyloxanthin biosynthesis; staphyloxanthin from farnesyl diphosphate: step 3/5. In terms of biological role, involved in the biosynthesis of the yellow-orange carotenoid staphyloxanthin, which plays a role in the virulence via its protective function against oxidative stress. Catalyzes the oxidation of the terminal methyl side group of 4,4'-diaponeurosporene to form 4,4'-diaponeurosporen-4-al. The sequence is that of 4,4'-diaponeurosporene oxygenase from Staphylococcus aureus (strain bovine RF122 / ET3-1).